We begin with the raw amino-acid sequence, 559 residues long: Phosphatase and actin regulator 3 (559 aa).

The disordered stretch occupies residues 1-65 (MAASEDGSGC…GIRTPPVRRN (65 aa)). A compositionally biased stretch (polar residues) spans 15-24 (GRSQSDPSVL). Low complexity predominate over residues 25–35 (TDSSATSSADA). A Phosphothreonine modification is found at Thr-70. The disordered stretch occupies residues 82 to 342 (KKKNEKLKQT…VERGKEREEA (261 aa)). Residues 93–118 (SALEKKMAGRQGREELIKKGLLEMME) form an RPEL 1 repeat. Residues 95–113 (LEKKMAGRQGREELIKKGL) show a composition bias toward basic and acidic residues. Residues 134 to 151 (SVQSEPPTPKSETLTSED) show a composition bias toward polar residues. Positions 229 to 240 (PSPPLLPTPPPK) are enriched in pro residues. Position 230 is a phosphoserine (Ser-230). Thr-236 carries the post-translational modification Phosphothreonine. Composition is skewed to polar residues over residues 248–262 (NVTG…SSMK) and 270–281 (GQLSTPTGSPHL). The segment covering 293–342 (VIEELHRALATKHRQDSFQGRESKGSPKKRLDVRLSRTSSVERGKEREEA) has biased composition (basic and acidic residues). The stretch at 346–369 (DGALENKRTAAKESEENKENLIIN) forms a coiled coil. 3 RPEL repeats span residues 401–426 (ELLA…PRRT), 439–464 (MKLS…KQRN), and 477–502 (QRLT…IRFS). The required for PP1CA binding and inhibition of PP1 activity stretch occupies residues 438-518 (EMKLSKRLSQ…KAQDYDRRAD (81 aa)). Residues 450–486 (AVEELERRNILKQRNDQTEQEERREIKQRLTRKLNQR) adopt a coiled-coil conformation.

It belongs to the phosphatase and actin regulator family. In terms of assembly, binds actin and PPP1CA; thus inhibiting the protein phosphatase 1 (PP1) activity. In terms of tissue distribution, abundantly expressed in brain. Also found in several tumors such as lung carcinomas, nervous tumors and HL-60 leukemia cells. Isoform 3 is the major form in U-937, GOTO and HL-60 leukemia cells.

The protein localises to the nucleus matrix. The polypeptide is Phosphatase and actin regulator 3 (PHACTR3) (Homo sapiens (Human)).